A 273-amino-acid chain; its full sequence is Imidazole glycerol phosphate synthase subunit HisF (273 aa).

Catalysis depends on residues Asp-11 and Asp-134.

Belongs to the HisA/HisF family. In terms of assembly, heterodimer of HisH and HisF.

The protein localises to the cytoplasm. It carries out the reaction 5-[(5-phospho-1-deoxy-D-ribulos-1-ylimino)methylamino]-1-(5-phospho-beta-D-ribosyl)imidazole-4-carboxamide + L-glutamine = D-erythro-1-(imidazol-4-yl)glycerol 3-phosphate + 5-amino-1-(5-phospho-beta-D-ribosyl)imidazole-4-carboxamide + L-glutamate + H(+). Its pathway is amino-acid biosynthesis; L-histidine biosynthesis; L-histidine from 5-phospho-alpha-D-ribose 1-diphosphate: step 5/9. Functionally, IGPS catalyzes the conversion of PRFAR and glutamine to IGP, AICAR and glutamate. The HisF subunit catalyzes the cyclization activity that produces IGP and AICAR from PRFAR using the ammonia provided by the HisH subunit. This Methanocella arvoryzae (strain DSM 22066 / NBRC 105507 / MRE50) protein is Imidazole glycerol phosphate synthase subunit HisF.